An 88-amino-acid polypeptide reads, in one-letter code: Small ribosomal subunit protein bS16 (88 aa).

It belongs to the bacterial ribosomal protein bS16 family.

This chain is Small ribosomal subunit protein bS16, found in Desulfitobacterium hafniense (strain DSM 10664 / DCB-2).